The following is a 619-amino-acid chain: Thiohydroximate-O-sulfate sulfur/sulfate-lyase (nitrile-forming) NSP4 (619 aa).

Jacalin-type lectin domains are found at residues 2-142 (AQKV…YFAP) and 151-292 (AKKL…YISL). Kelch repeat units follow at residues 326–374 (KIYS…VCMV), 379–425 (TLYV…SMAA), 429–478 (NVYV…VVQG), 480–524 (VWVV…ASAA), and 528–583 (HIVI…GWTA). Catalysis depends on R386, which acts as the Proton donor. Residues R386, S419, R441, G470, and V519 each contribute to the a (Z)-N-(sulfonatooxy)alkanimidothioate site. Residue R441 is the Proton donor of the active site. Residues E535, D539, and H543 each coordinate Fe(2+). Residue W581 participates in a (Z)-N-(sulfonatooxy)alkanimidothioate binding.

It belongs to the jacalin lectin family. Requires Fe(2+) as cofactor. In terms of tissue distribution, mainly expressed in roots, and, to a lower extent, in seedlings and leaves. Observed in seeds.

It carries out the reaction a (Z)-N-(sulfonatooxy)alkanimidothioate = a nitrile + sulfur + sulfate. It catalyses the reaction (Z)-phenyl-N-(sulfonatooxy)methanimidothioate = phenylacetonitrile + sulfur + sulfate. The catalysed reaction is (Z)-N-(sulfonatooxy)prop-2-enimidothioate = but-3-enenitrile + sulfur + sulfate. Its function is as follows. Specifier protein that contributes to constitutive and herbivore-induced simple nitrile formation. Promotes simple nitriles, but not epithionitrile or thiocyanate formation. Converts allylglucosinolate and benzylglucosinolate (glucotropaeolin) to their corresponding simple nitriles in the presence of myrosinase. The chain is Thiohydroximate-O-sulfate sulfur/sulfate-lyase (nitrile-forming) NSP4 from Arabidopsis thaliana (Mouse-ear cress).